Here is a 95-residue protein sequence, read N- to C-terminus: Small ribosomal subunit protein bS6 (95 aa).

This sequence belongs to the bacterial ribosomal protein bS6 family.

Binds together with bS18 to 16S ribosomal RNA. The polypeptide is Small ribosomal subunit protein bS6 (Exiguobacterium sp. (strain ATCC BAA-1283 / AT1b)).